We begin with the raw amino-acid sequence, 206 residues long: Large ribosomal subunit protein uL4 (206 aa).

Residues 43–78 (ARSGNRKQKDREEVKHTTKKPWRQKGTGRARAGMSS) form a disordered region. The segment covering 49-58 (KQKDREEVKH) has biased composition (basic and acidic residues). Residues 59–70 (TTKKPWRQKGTG) are compositionally biased toward basic residues.

Belongs to the universal ribosomal protein uL4 family. As to quaternary structure, part of the 50S ribosomal subunit.

Its function is as follows. One of the primary rRNA binding proteins, this protein initially binds near the 5'-end of the 23S rRNA. It is important during the early stages of 50S assembly. It makes multiple contacts with different domains of the 23S rRNA in the assembled 50S subunit and ribosome. Forms part of the polypeptide exit tunnel. The sequence is that of Large ribosomal subunit protein uL4 from Cupriavidus metallidurans (strain ATCC 43123 / DSM 2839 / NBRC 102507 / CH34) (Ralstonia metallidurans).